The sequence spans 215 residues: Nuclear autoantigen Sp-100 (215 aa).

The SAND domain maps to 1–31; it reads EGDRGASKNWKLSIRCGGYTLKVLTENKFLP. 2 DNA-binding regions (HMG box) span residues 32–108 and 124–192; these read EPPS…KTYI and PKRP…AACR. A Nuclear localization signal motif is present at residues 72 to 89; that stretch reads KKRSEMWKTIFAKEKGKF. Disordered regions lie at residues 104–124 and 193–215; these read MKTY…PNAP and AKGK…KKKE.

In terms of assembly, homodimer. Interacts with members of the HP1 family of nonhistone chromosomal protein, such as CBX5 and CBX3 via the PxVxL motif. Interacts with ETS1; the interaction is direct and modulates ETS1 transcriptional activity. Interacts with the MRN complex which is composed of two heterodimers RAD50/MRE11 associated with a single NBN; recruits the complex to PML-related bodies. Interacts with HIPK2; positively regulates TP53-dependent transcription. Interacts with CASP8AP2; may negatively regulate CASP8AP2 export from the nucleus to the cytoplasm. Post-translationally, phosphorylated. In terms of processing, sumoylated. Sumoylated with SUMO1. Sumoylation depends on a functional nuclear localization signal but is not necessary for nuclear import or nuclear body targeting. Sumoylation may stabilize the interaction with CBX5.

It is found in the nucleus. The protein resides in the PML body. The protein localises to the nuclear body. Its subcellular location is the cytoplasm. Its function is as follows. Together with PML, this tumor suppressor is a major constituent of the PML bodies, a subnuclear organelle involved in a large number of physiological processes including cell growth, differentiation and apoptosis. Functions as a transcriptional coactivator of ETS1 and ETS2. Under certain conditions, it may also act as a corepressor of ETS1 preventing its binding to DNA. Through the regulation of ETS1 it may play a role in angiogenesis, controlling endothelial cell motility and invasion. Through interaction with the MRN complex it may be involved in the regulation of telomeres lengthening. May also regulate TP53-mediated transcription and through CASP8AP2, regulate FAS-mediated apoptosis. May also play a role in infection by viruses through mechanisms that may involve chromatin and/or transcriptional regulation. The chain is Nuclear autoantigen Sp-100 (SP100) from Pan troglodytes (Chimpanzee).